Consider the following 156-residue polypeptide: 6,7-dimethyl-8-ribityllumazine synthase (156 aa).

5-amino-6-(D-ribitylamino)uracil is bound by residues phenylalanine 23, 57–59, and 81–83; these read AFE and AVI. Residue 86–87 coordinates (2S)-2-hydroxy-3-oxobutyl phosphate; that stretch reads ST. Residue histidine 89 is the Proton donor of the active site. Phenylalanine 114 lines the 5-amino-6-(D-ribitylamino)uracil pocket. (2S)-2-hydroxy-3-oxobutyl phosphate is bound at residue arginine 128.

It belongs to the DMRL synthase family.

The enzyme catalyses (2S)-2-hydroxy-3-oxobutyl phosphate + 5-amino-6-(D-ribitylamino)uracil = 6,7-dimethyl-8-(1-D-ribityl)lumazine + phosphate + 2 H2O + H(+). It participates in cofactor biosynthesis; riboflavin biosynthesis; riboflavin from 2-hydroxy-3-oxobutyl phosphate and 5-amino-6-(D-ribitylamino)uracil: step 1/2. Its function is as follows. Catalyzes the formation of 6,7-dimethyl-8-ribityllumazine by condensation of 5-amino-6-(D-ribitylamino)uracil with 3,4-dihydroxy-2-butanone 4-phosphate. This is the penultimate step in the biosynthesis of riboflavin. This Campylobacter lari (strain RM2100 / D67 / ATCC BAA-1060) protein is 6,7-dimethyl-8-ribityllumazine synthase.